Consider the following 10061-residue polypeptide: MATH and LRR domain-containing protein PFE0570w (10061 aa).

3 disordered regions span residues 166 to 210 (DMDN…EKKN), 244 to 471 (NNSD…NDIN), and 1004 to 1170 (DDQK…DTSF). Residues 169-179 (NNPNNHVSNNG) are compositionally biased toward polar residues. The segment covering 193–205 (TSNSIHKNNNTNI) has biased composition (low complexity). Positions 270–282 (KKSDNNNDKKNDD) are enriched in basic and acidic residues. Over residues 285–320 (NNNNNNNNNNNNNNNNNDNHVCTSNNQPNTINKQNN) the composition is skewed to low complexity. Polar residues predominate over residues 328–338 (DQNGRTKITPQ). Residues 338 to 366 (QNVNQKEKEIKNVVKEKNNFNREEKDITN) adopt a coiled-coil conformation. The segment covering 342-365 (QKEKEIKNVVKEKNNFNREEKDIT) has biased composition (basic and acidic residues). Positions 366–375 (NSDDYDENST) are enriched in acidic residues. Composition is skewed to polar residues over residues 376-389 (DESC…TSSE) and 421-437 (VPSN…SAEN). A coiled-coil region spans residues 431 to 469 (NVKSAENCNKEKKKKKKKKKKELNNDNKDNTLNNETMND). A compositionally biased stretch (basic residues) spans 441-451 (EKKKKKKKKKK). Positions 460 to 471 (NTLNNETMNDIN) are enriched in low complexity. Over residues 1025-1037 (NEEKPNVNKEGNI) the composition is skewed to basic and acidic residues. The segment covering 1047–1057 (NKNKNNNNNNN) has biased composition (low complexity). The segment covering 1058-1132 (DKNDKNDKND…KKKKNGKEQN (75 aa)) has biased composition (basic and acidic residues). A compositionally biased stretch (acidic residues) spans 1133–1165 (EDSTESDDESSVIDDNYIDDDSCDCDSESDSID). In terms of domain architecture, MATH spans 1328 to 1458 (NGKIELYIPN…SGGLLIKGKV (131 aa)). The tract at residues 1651-1698 (GGNLQNEQKGDEDVKKEDVKKENVNKEEIKNGNNNNNNDENENEVDDN) is disordered. Positions 1658–1680 (QKGDEDVKKEDVKKENVNKEEIK) are enriched in basic and acidic residues. A coiled-coil region spans residues 1916 to 1948 (NYLSNLNKVKININDLNNNIVDVNNSIHNIEKE). The segment covering 1973–1995 (HKETSSIQNKGKEKSNNNIKSDD) has biased composition (basic and acidic residues). Disordered regions lie at residues 1973 to 1998 (HKET…DNNN), 2155 to 2245 (LNKS…PSYK), 2427 to 2566 (YSDD…NNIK), and 3120 to 3139 (SNET…NEMK). A compositionally biased stretch (acidic residues) spans 2216-2228 (NNDDKDDDDDDSY). Basic and acidic residues predominate over residues 2235-2245 (SDGKKNDPSYK). A compositionally biased stretch (low complexity) spans 2475 to 2484 (NNNNNNNNMM). 2 stretches are compositionally biased toward basic and acidic residues: residues 2487–2496 (DDNKVNKNEE) and 2505–2527 (QIKE…RNED). Composition is skewed to low complexity over residues 2552-2564 (NNNN…NNNN) and 3121-3133 (NETN…NRTN). A coiled-coil region spans residues 2555–2580 (NNNNNNNNNNIKRLDDSYNKLLKNKN). A helical transmembrane segment spans residues 3398-3418 (KLILKKIFMYLNIICMIIKYI). Disordered regions lie at residues 3802-3826 (STND…YSKK), 3847-3890 (LTSG…DNNN), and 3919-3953 (ESND…EKKS). Positions 3809-3822 (VDRSDDSESNDDKK) are enriched in basic and acidic residues. Residues 3851–3890 (NSSSKNSKKNSNNESIQMDNTNNSNSNNNNKNDNNNDNNN) show a composition bias toward low complexity. Residues 3926–3941 (KNQNIQSNEQSVTPNR) show a composition bias toward polar residues. The span at 3942 to 3953 (NIEENKDHEKKS) shows a compositional bias: basic and acidic residues. Residues 3977–4001 (EHLGNATAVLNILQKKLENEELKKL) adopt a coiled-coil conformation. A compositionally biased stretch (basic and acidic residues) spans 4039-4065 (VSAHKEKNVKTDSSDDKKKKEDNENNN). Disordered stretches follow at residues 4039–4074 (VSAH…IIHN), 4155–4180 (KGNN…NNMG), 4352–4414 (SNNN…NNNN), 4919–4943 (NKRK…DNDN), 4991–5030 (DGLN…KNEK), and 5179–5207 (SKIA…KSNL). Positions 4157-4178 (NNSKDNNNNNNNNNNNNNNKNN) are enriched in low complexity. Residues 4399–4424 (NNNNNNNNNNNNNNNNVNKEIIKLNS) adopt a coiled-coil conformation. 3 stretches are compositionally biased toward low complexity: residues 4929 to 4943 (NNNN…DNDN), 5004 to 5019 (NMNN…NNSN), and 5185 to 5202 (NGNN…NNNN). A coiled-coil region spans residues 5006–5046 (NNVKNKNNNNNNSNNKRKKNEKNEKIDKIEQFLHESELEKD). Coiled coils occupy residues 5486-5563 (NNNN…NIYE), 5728-5810 (DVLK…DKEE), and 5900-6022 (MNND…INNY). Basic and acidic residues-rich tracts occupy residues 5716 to 5732 (KDAK…VLKD), 5738 to 5811 (SNKE…KEEP), and 5909 to 5953 (NKNK…KKDN). Disordered stretches follow at residues 5716-5816 (KDAK…QINE), 5892-6009 (EIIN…KKLK), 6123-6142 (KSET…VDGK), 6299-6338 (NDSI…DKGE), 6722-6760 (NMNN…NNNI), 7585-7730 (EDML…VEEK), and 7744-7787 (DLLS…KKSS). Residues 5954–5968 (NNSNNNNNNNNLSNN) show a composition bias toward low complexity. A compositionally biased stretch (acidic residues) spans 5969–5978 (GEEDPNDSDS). A compositionally biased stretch (basic and acidic residues) spans 5991 to 6003 (NKNINDDSDDNNK). Residues 6129–6138 (SNKNVESNDN) show a composition bias toward polar residues. 2 stretches are compositionally biased toward low complexity: residues 6314 to 6333 (SNSN…NNNN) and 6722 to 6759 (NMNN…NNNN). The stretch at 6719 to 6743 (NMNNMNNNNNNNNNNNNNNNNNNNN) forms a coiled coil. Positions 7585-7599 (EDMLHSKKTDVIQHG) are enriched in basic and acidic residues. Acidic residues predominate over residues 7600–7685 (DEEEDDEEDD…EHINEEEQED (86 aa)). Coiled-coil stretches lie at residues 7601–7637 (EEED…DIED), 7710–7813 (NTKI…NKNE), 7934–7961 (KTDE…IDNE), and 8217–8241 (NINN…GKRE). The segment covering 7749–7765 (SKKKNHKDKRNASKNKN) has biased composition (basic residues). Residues 7766 to 7786 (KNKDILKKNENNINDEKEKKS) show a composition bias toward basic and acidic residues. 3 disordered regions span residues 8189–8252 (ETGG…GGEE), 8293–8380 (GKVS…IIMS), and 8474–8497 (KKKN…MDEE). Positions 8218–8242 (INNKEKETNKNEEQQQGEAEGKREG) are enriched in basic and acidic residues. The span at 8243–8252 (EGEEGEGGEE) shows a compositional bias: acidic residues. The segment covering 8305–8314 (LLNDKEHEKD) has biased composition (basic and acidic residues). The span at 8315 to 8363 (NEDNDEDNDEDDDDEDDDEDDEDDDDDDDDDDDDDDDDDYDEDYDEDYD) shows a compositional bias: acidic residues. The span at 8364–8374 (EKLVENKKNER) shows a compositional bias: basic and acidic residues. The segment covering 8478–8492 (YSNNNIYNNNSSNKV) has biased composition (low complexity). 3 coiled-coil regions span residues 8644–8697 (SETL…ELNN), 8882–8907 (QYLE…VDNY), and 9219–9247 (IDMK…SNNN). Disordered stretches follow at residues 9759-9779 (TIPR…NNNS), 9891-9926 (SNTS…SSSN), and 9985-10061 (KNNS…NNIY). Low complexity-rich tracts occupy residues 9764–9779 (NTTT…NNNS), 9899–9926 (NSSN…SSSN), and 9986–10022 (NNSI…NNNT). A compositionally biased stretch (polar residues) spans 10031 to 10041 (IFQQNQNHSDT). The span at 10042 to 10061 (NNNNNNNNKNNSNNNNNNIY) shows a compositional bias: low complexity.

It localises to the membrane. In Plasmodium falciparum (isolate 3D7), this protein is MATH and LRR domain-containing protein PFE0570w.